We begin with the raw amino-acid sequence, 520 residues long: Autophagy-related protein 22 (520 aa).

Asn11 carries an N-linked (GlcNAc...) asparagine glycan. The next 4 helical transmembrane spans lie at 32-52 (IVGW…AIAT), 104-124 (FSVS…VVDI), 133-153 (NVLL…SRIY), and 158-178 (YMLA…NVVG). The N-linked (GlcNAc...) asparagine glycan is linked to Asn193. 2 consecutive transmembrane segments (helical) span residues 214–234 (GASI…FLIK) and 244–264 (VATL…SWLL). N-linked (GlcNAc...) asparagine glycosylation occurs at Asn280. 6 helical membrane passes run 316–336 (VVIF…INST), 350–370 (LSLI…AFTI), 386–406 (LIYI…GFVF), 415–435 (FEMF…SAVS), 454–474 (IFNV…GLIT), and 483–503 (SFFL…LLDV).

It belongs to the ATG22 family.

The protein localises to the vacuole membrane. Vacuolar effluxer which mediate the efflux of amino acids resulting from autophagic degradation. The release of autophagic amino acids allows the maintenance of protein synthesis and viability during nitrogen starvation. The polypeptide is Autophagy-related protein 22 (ATG22) (Vanderwaltozyma polyspora (strain ATCC 22028 / DSM 70294 / BCRC 21397 / CBS 2163 / NBRC 10782 / NRRL Y-8283 / UCD 57-17) (Kluyveromyces polysporus)).